Here is a 230-residue protein sequence, read N- to C-terminus: Lipoprotein-releasing system ATP-binding protein LolD (230 aa).

Positions 10-228 constitute an ABC transporter domain; the sequence is LRAEHLSKVY…QLHMANGRLL (219 aa). 46-53 contacts ATP; the sequence is GASGSGKS.

The protein belongs to the ABC transporter superfamily. Lipoprotein translocase (TC 3.A.1.125) family. The complex is composed of two ATP-binding proteins (LolD) and two transmembrane proteins (LolC and LolE).

It is found in the cell inner membrane. Part of the ABC transporter complex LolCDE involved in the translocation of mature outer membrane-directed lipoproteins, from the inner membrane to the periplasmic chaperone, LolA. Responsible for the formation of the LolA-lipoprotein complex in an ATP-dependent manner. The protein is Lipoprotein-releasing system ATP-binding protein LolD of Bordetella avium (strain 197N).